A 204-amino-acid polypeptide reads, in one-letter code: Cytochrome c oxidase subunit 3 (204 aa).

5 helical membrane passes run 12 to 32, 56 to 76, 101 to 121, 133 to 153, and 171 to 191; these read YGNL…IQWW, GMML…WAYF, FQIP…VTWA, AIHS…LQMM, and FFVA…FLFM.

Belongs to the cytochrome c oxidase subunit 3 family. Component of the cytochrome c oxidase (complex IV, CIV), a multisubunit enzyme composed of a catalytic core of 3 subunits and several supernumerary subunits. The complex exists as a monomer or a dimer and forms supercomplexes (SCs) in the inner mitochondrial membrane with ubiquinol-cytochrome c oxidoreductase (cytochrome b-c1 complex, complex III, CIII).

Its subcellular location is the mitochondrion inner membrane. The enzyme catalyses 4 Fe(II)-[cytochrome c] + O2 + 8 H(+)(in) = 4 Fe(III)-[cytochrome c] + 2 H2O + 4 H(+)(out). In terms of biological role, component of the cytochrome c oxidase, the last enzyme in the mitochondrial electron transport chain which drives oxidative phosphorylation. The respiratory chain contains 3 multisubunit complexes succinate dehydrogenase (complex II, CII), ubiquinol-cytochrome c oxidoreductase (cytochrome b-c1 complex, complex III, CIII) and cytochrome c oxidase (complex IV, CIV), that cooperate to transfer electrons derived from NADH and succinate to molecular oxygen, creating an electrochemical gradient over the inner membrane that drives transmembrane transport and the ATP synthase. Cytochrome c oxidase is the component of the respiratory chain that catalyzes the reduction of oxygen to water. Electrons originating from reduced cytochrome c in the intermembrane space (IMS) are transferred via the dinuclear copper A center (CU(A)) of subunit 2 and heme A of subunit 1 to the active site in subunit 1, a binuclear center (BNC) formed by heme A3 and copper B (CU(B)). The BNC reduces molecular oxygen to 2 water molecules using 4 electrons from cytochrome c in the IMS and 4 protons from the mitochondrial matrix. This is Cytochrome c oxidase subunit 3 (COIII) from Enteroctopus dofleini (North Pacific giant octopus).